Reading from the N-terminus, the 208-residue chain is ATP synthase subunit beta, chloroplastic (208 aa).

This sequence belongs to the ATPase alpha/beta chains family. F-type ATPases have 2 components, CF(1) - the catalytic core - and CF(0) - the membrane proton channel. CF(1) has five subunits: alpha(3), beta(3), gamma(1), delta(1), epsilon(1). CF(0) has four main subunits: a(1), b(1), b'(1) and c(9-12).

The protein resides in the plastid. The protein localises to the chloroplast thylakoid membrane. It carries out the reaction ATP + H2O + 4 H(+)(in) = ADP + phosphate + 5 H(+)(out). Produces ATP from ADP in the presence of a proton gradient across the membrane. The catalytic sites are hosted primarily by the beta subunits. This chain is ATP synthase subunit beta, chloroplastic (atpB), found in Lonchitis hirsuta (Tomato fern).